The chain runs to 345 residues: Homeobox-leucine zipper protein HOX16 (345 aa).

Positions 76–135 form a DNA-binding region, homeobox; it reads LPEKKRRLTPEQVHLLERSFEEENKLEPERKTELARKLGLQPRQVAVWFQNRRARWKTKQ. The tract at residues 134 to 178 is leucine-zipper; the sequence is KQLERDFDRLKASFDALRADHDALLQDNHRLHSQVMSLTEKLQEK. A disordered region spans residues 220-241; sequence FEEQQEQQVKAEDRLSTGSGGS.

This sequence belongs to the HD-ZIP homeobox family. Class I subfamily. Expressed in seedlings, stems, leaf sheaths and blades and panicles.

Its subcellular location is the nucleus. Functionally, probable transcription factor. The chain is Homeobox-leucine zipper protein HOX16 (HOX16) from Oryza sativa subsp. indica (Rice).